The following is a 325-amino-acid chain: Natural cytotoxicity triggering receptor 1 (325 aa).

The signal sequence occupies residues 1–16 (MLPTLTALLCLGLCLS). Topologically, residues 17 to 258 (QRINTEKQTL…WDHTAQNLIR (242 aa)) are extracellular. 2 Ig-like domains span residues 42-100 (GNSV…TCFY) and 137-192 (GENV…RCFG). A disulfide bridge connects residues C49 and C98. Residue N139 is glycosylated (N-linked (GlcNAc...) asparagine). C144 and C190 are joined by a disulfide. A glycan (N-linked (GlcNAc...) asparagine) is linked at N216. A helical transmembrane segment spans residues 259 to 279 (IGLACIIVMALVWLLAEDWLS). The Cytoplasmic portion of the chain corresponds to 280–325 (RRKDHEKLNRLTSWECRGRRRMHRYHEEEQRDAISMRELKATPGDM).

The protein belongs to the natural cytotoxicity receptor (NCR) family. As to quaternary structure, interacts with CD3Z and FCER1G. As to expression, weakly expressed in spleen, heart and lung.

It is found in the cell membrane. Its function is as follows. Cytotoxicity-activating receptor that may contribute to the increased efficiency of activated natural killer (NK) cells to mediate tumor cell lysis. The protein is Natural cytotoxicity triggering receptor 1 (Ncr1) of Rattus norvegicus (Rat).